The following is a 438-amino-acid chain: Xylose isomerase (438 aa).

Residues H103 and D106 contribute to the active site. Mg(2+) is bound by residues E234, E270, H273, D298, D309, D311, and D341.

Belongs to the xylose isomerase family. Homotetramer. It depends on Mg(2+) as a cofactor.

Its subcellular location is the cytoplasm. The enzyme catalyses alpha-D-xylose = alpha-D-xylulofuranose. This chain is Xylose isomerase, found in Phocaeicola vulgatus (strain ATCC 8482 / DSM 1447 / JCM 5826 / CCUG 4940 / NBRC 14291 / NCTC 11154) (Bacteroides vulgatus).